The chain runs to 290 residues: Pyridoxal kinase PdxY (290 aa).

Residues S12 and 47-48 each bind substrate; that span reads TQ. ATP is bound by residues D114, E151, K184, and 211 to 214; that span reads RPLL. D225 contributes to the substrate binding site.

It belongs to the pyridoxine kinase family. PdxY subfamily. As to quaternary structure, homodimer. Requires Mg(2+) as cofactor.

It catalyses the reaction pyridoxal + ATP = pyridoxal 5'-phosphate + ADP + H(+). Its pathway is cofactor metabolism; pyridoxal 5'-phosphate salvage; pyridoxal 5'-phosphate from pyridoxal: step 1/1. In terms of biological role, pyridoxal kinase involved in the salvage pathway of pyridoxal 5'-phosphate (PLP). Catalyzes the phosphorylation of pyridoxal to PLP. The sequence is that of Pyridoxal kinase PdxY from Pseudomonas fluorescens (strain SBW25).